Here is a 500-residue protein sequence, read N- to C-terminus: L-arabinose isomerase (500 aa).

Residues Glu306, Glu333, His350, and His450 each contribute to the Mn(2+) site.

It belongs to the arabinose isomerase family. Homohexamer. The cofactor is Mn(2+).

It catalyses the reaction beta-L-arabinopyranose = L-ribulose. The protein operates within carbohydrate degradation; L-arabinose degradation via L-ribulose; D-xylulose 5-phosphate from L-arabinose (bacterial route): step 1/3. Its function is as follows. Catalyzes the conversion of L-arabinose to L-ribulose. This is L-arabinose isomerase from Shigella dysenteriae serotype 1 (strain Sd197).